Consider the following 145-residue polypeptide: 3-dehydroquinate dehydratase (145 aa).

Catalysis depends on Tyr-24, which acts as the Proton acceptor. The substrate site is built by Asn-75, His-81, and Asp-88. His-102 (proton donor) is an active-site residue. Substrate contacts are provided by residues 103-104 (LS) and Arg-113.

It belongs to the type-II 3-dehydroquinase family. In terms of assembly, homododecamer.

It carries out the reaction 3-dehydroquinate = 3-dehydroshikimate + H2O. Its pathway is metabolic intermediate biosynthesis; chorismate biosynthesis; chorismate from D-erythrose 4-phosphate and phosphoenolpyruvate: step 3/7. Functionally, catalyzes a trans-dehydration via an enolate intermediate. This Chelativorans sp. (strain BNC1) protein is 3-dehydroquinate dehydratase.